The sequence spans 595 residues: MAPWSGLWGGKLAAGESPVLRSRFYAFIRAFVVLSVLLLIVELGAYINGWDDLAASALALPVIGVESLYASWLRFRATYVAPFIQFLTDACVVLFLIQSADRLIQCLGCFYIHLKRIKPNPKSPALPDAEDPDAAYYPMVLVQIPMCNEKEVYQQSIAAVCNLDWPRSNFLVQVLDDSDDPTTQTLIREEVLKWQQNGARIVYRHRVLRDGYKAGNLKSAMSCSYVKDYEFVAIFDADFQPNPDFLKRTVPHFKDNDELGLVQARWSFVNKDENLLTRLQNINLCFHFEVEQQVNGIFLNFFGFNGTAGVWRIKALDDSGGWMERTTVEDMDIAVRAHLRGWKFIFLNDVECQCELPESYEAYRKQQHRWHSGPMQLFRLCLPDIIKCKIVFWKKANLIFLFFLLRKLILPFYSFTLFCIILPMTMFVPEAELPDWVVCYIPALMSLLNILPSPKSFPFIIPYLLFENTMSVTKFNAMISGLFQLGNAYEWVVTKKSGRSSEGDLISLAPKELKHQKTESAPNLDAIAKEQSAPRKDVKKKHNRIYKKELALSLLLLTAAARSLLSKQGIHFYFLLFQGISFLLVGLDLIGEQIE.

2 consecutive transmembrane segments (helical) span residues 30-50 (AFVV…INGW) and 77-97 (ATYV…LFLI). Aspartate 177 is an active-site residue. 2 residues coordinate substrate: aspartate 236 and aspartate 238. Residue aspartate 330 is part of the active site. 4 helical membrane-spanning segments follow: residues 408–428 (LILP…TMFV), 433–453 (LPDW…ILPS), 545–564 (IYKK…ARSL), and 570–590 (IHFY…LDLI).

It belongs to the glycosyltransferase 2 family. Plant cellulose synthase-like C subfamily.

It localises to the golgi apparatus membrane. Its function is as follows. Probable beta-1,4-glucan synthase rather involved in the synthesis of the xyloglucan backbone than cellulose. Seems to work simultaneously with xyloglucan 6-xylosyltransferase. Xyloglucan is a noncellulosic polysaccharides of plant cell wall and consists of a glucan backbone substituted by xylose, galactose and fucose. The chain is Probable xyloglucan glycosyltransferase 9 (CSLC9) from Oryza sativa subsp. japonica (Rice).